A 382-amino-acid chain; its full sequence is Glutamine synthetase cytosolic isozyme (382 aa).

The region spanning 36–118 (GKICAEYVWI…VMCDCYEPPK (83 aa)) is the GS beta-grasp domain. The region spanning 135-382 (TRFACAEVME…RLIVETTILL (248 aa)) is the GS catalytic domain.

The protein belongs to the glutamine synthetase family. Homooctamer.

It is found in the cytoplasm. The enzyme catalyses L-glutamate + NH4(+) + ATP = L-glutamine + ADP + phosphate + H(+). In Chlamydomonas reinhardtii (Chlamydomonas smithii), this protein is Glutamine synthetase cytosolic isozyme (GLN1).